The chain runs to 887 residues: Valine--tRNA ligase (887 aa).

A 'HIGH' region motif is present at residues 47 to 57; that stretch reads PNVTGALHMGH. A 'KMSKS' region motif is present at residues 527-531; it reads KMSKS. Lys530 is a binding site for ATP. The stretch at 817–885 forms a coiled coil; the sequence is LVNVEEEEKR…LLASLEKIRK (69 aa).

Belongs to the class-I aminoacyl-tRNA synthetase family. ValS type 1 subfamily. In terms of assembly, monomer.

The protein resides in the cytoplasm. The enzyme catalyses tRNA(Val) + L-valine + ATP = L-valyl-tRNA(Val) + AMP + diphosphate. Its function is as follows. Catalyzes the attachment of valine to tRNA(Val). As ValRS can inadvertently accommodate and process structurally similar amino acids such as threonine, to avoid such errors, it has a 'posttransfer' editing activity that hydrolyzes mischarged Thr-tRNA(Val) in a tRNA-dependent manner. The polypeptide is Valine--tRNA ligase (Geobacter sulfurreducens (strain ATCC 51573 / DSM 12127 / PCA)).